We begin with the raw amino-acid sequence, 355 residues long: MAQPTFFTKPPATALADIATLTKALLVDPTRGDHVITGLASLDEAGPMHLAFFDNLKYADQLKATRAGACLVSPRFEAQVPAHVAVLRAAQPFRAFVRIAREWHGDALRPQSWVGNDGIAPSAIIDPTARLEDGVIVDPLAVIGADVEIGSGTVVGVGAVIGPGVKIGRDCNVGARTAIQCALIGNDVLIHPGCSIGQDGYGFIFFGPEGHLKVPQTGRVLIQNNVEVGAGTTIDRGSLRDTVIGEGTKIDNQVQIGHNVTIGRNCLLAAQIGLAGSLTIGDNVALGAKVGINNHLKIGDGAQVTAMSGVKDDIPPNGRWGGFFAKPTKQWFKEIIAVERLVRDSRADPKDEGRE.

The active-site Proton acceptor is histidine 258.

Belongs to the transferase hexapeptide repeat family. LpxD subfamily. In terms of assembly, homotrimer.

It carries out the reaction a UDP-3-O-[(3R)-3-hydroxyacyl]-alpha-D-glucosamine + a (3R)-hydroxyacyl-[ACP] = a UDP-2-N,3-O-bis[(3R)-3-hydroxyacyl]-alpha-D-glucosamine + holo-[ACP] + H(+). It functions in the pathway bacterial outer membrane biogenesis; LPS lipid A biosynthesis. Functionally, catalyzes the N-acylation of UDP-3-O-acylglucosamine using 3-hydroxyacyl-ACP as the acyl donor. Is involved in the biosynthesis of lipid A, a phosphorylated glycolipid that anchors the lipopolysaccharide to the outer membrane of the cell. The chain is UDP-3-O-acylglucosamine N-acyltransferase from Bradyrhizobium diazoefficiens (strain JCM 10833 / BCRC 13528 / IAM 13628 / NBRC 14792 / USDA 110).